Consider the following 578-residue polypeptide: 15-cis-phytoene desaturase, chloroplastic/chromoplastic (578 aa).

A chloroplast and chromoplast-targeting transit peptide spans 1–87 (MDTGCLSSMN…PLENTINFLE (87 aa)). Residues A115, 134–135 (EA), K142, 159–160 (HI), and Y165 each bind FAD. Position 300 (R300) interacts with substrate. 2 residues coordinate FAD: I342 and D531. A539 contributes to the substrate binding site. M541 serves as a coordination point for FAD.

Belongs to the carotenoid/retinoid oxidoreductase family. Homotetramer. Homotetramer is the active form of the enzyme. FAD serves as cofactor.

The protein localises to the plastid. The protein resides in the chloroplast. Its subcellular location is the chromoplast. It localises to the membrane. The catalysed reaction is 2 a plastoquinone + 15-cis-phytoene = 9,9',15-tri-cis-zeta-carotene + 2 a plastoquinol. It functions in the pathway carotenoid biosynthesis; lycopene biosynthesis. Its activity is regulated as follows. Inhibited by the herbicide norflurazon (NFZ). In terms of biological role, converts phytoene into zeta-carotene via the intermediary of phytofluene by the symmetrical introduction of two double bonds at the C-11 and C-11' positions of phytoene with a concomitant isomerization of two neighboring double bonds at the C9 and C9' positions from trans to cis. Active with decylplastoquinone (DPQ) as substrate. Also active with other benzoquinones, which are strongly preferred over naphthoquinones as substrates. In Oryza sativa subsp. indica (Rice), this protein is 15-cis-phytoene desaturase, chloroplastic/chromoplastic (PDS1).